The primary structure comprises 213 residues: Octanoyltransferase (213 aa).

In terms of domain architecture, BPL/LPL catalytic spans 32–207 (ENSHDEIWLV…NILALLNNPP (176 aa)). Residues 71–78 (RGGQVTYH), 138–140 (SLG), and 151–153 (GLA) each bind substrate. Cys-169 (acyl-thioester intermediate) is an active-site residue.

It belongs to the LipB family.

It localises to the cytoplasm. It catalyses the reaction octanoyl-[ACP] + L-lysyl-[protein] = N(6)-octanoyl-L-lysyl-[protein] + holo-[ACP] + H(+). It functions in the pathway protein modification; protein lipoylation via endogenous pathway; protein N(6)-(lipoyl)lysine from octanoyl-[acyl-carrier-protein]: step 1/2. Its function is as follows. Catalyzes the transfer of endogenously produced octanoic acid from octanoyl-acyl-carrier-protein onto the lipoyl domains of lipoate-dependent enzymes. Lipoyl-ACP can also act as a substrate although octanoyl-ACP is likely to be the physiological substrate. In Salmonella paratyphi A (strain ATCC 9150 / SARB42), this protein is Octanoyltransferase.